Here is a 151-residue protein sequence, read N- to C-terminus: MSDERTFIAIKPDGVQRGLISQILSRFESRGYKLVGIKLVTPTENLLKQHYAEHVEKPFFPKMLAYMTSGPILATVWEGKDVVKQGRVILGATNPLNSAPGTIRGDFALDMGRNVCHGSDSVESAQREIDLWFKKEELVDWKLNQLSWIYE.

ATP-binding residues include Lys-11, Phe-59, Arg-87, Thr-93, Arg-104, and Asn-114. His-117 acts as the Pros-phosphohistidine intermediate in catalysis.

This sequence belongs to the NDK family. Mg(2+) serves as cofactor.

The catalysed reaction is a 2'-deoxyribonucleoside 5'-diphosphate + ATP = a 2'-deoxyribonucleoside 5'-triphosphate + ADP. The enzyme catalyses a ribonucleoside 5'-diphosphate + ATP = a ribonucleoside 5'-triphosphate + ADP. Functionally, major role in the synthesis of nucleoside triphosphates other than ATP. The ATP gamma phosphate is transferred to the NDP beta phosphate via a ping-pong mechanism, using a phosphorylated active-site intermediate. This is Nucleoside diphosphate kinase (NDK1) from Eremothecium gossypii (strain ATCC 10895 / CBS 109.51 / FGSC 9923 / NRRL Y-1056) (Yeast).